The primary structure comprises 553 residues: Imidazole glycerol phosphate synthase hisHF (553 aa).

Residues Thr-3 to Ser-223 form the Glutamine amidotransferase type-1 domain. Residues Cys-81, His-194, and Glu-196 each act as for GATase activity in the active site. Residues Leu-232 to Val-553 form a cyclase region. Active-site residues include Asp-241 and Asp-403.

This sequence in the C-terminal section; belongs to the HisA/HisF family.

The enzyme catalyses 5-[(5-phospho-1-deoxy-D-ribulos-1-ylimino)methylamino]-1-(5-phospho-beta-D-ribosyl)imidazole-4-carboxamide + L-glutamine = D-erythro-1-(imidazol-4-yl)glycerol 3-phosphate + 5-amino-1-(5-phospho-beta-D-ribosyl)imidazole-4-carboxamide + L-glutamate + H(+). It catalyses the reaction L-glutamine + H2O = L-glutamate + NH4(+). Its pathway is amino-acid biosynthesis; L-histidine biosynthesis; L-histidine from 5-phospho-alpha-D-ribose 1-diphosphate: step 5/9. IGPS catalyzes the conversion of PRFAR and glutamine to IGP, AICAR and glutamate. The glutaminase domain produces the ammonia necessary for the cyclase domain to produce IGP and AICAR from PRFAR. The ammonia is channeled to the active site of the cyclase domain. The protein is Imidazole glycerol phosphate synthase hisHF (hisHF) of Emericella nidulans (strain FGSC A4 / ATCC 38163 / CBS 112.46 / NRRL 194 / M139) (Aspergillus nidulans).